We begin with the raw amino-acid sequence, 190 residues long: Pyridoxamine 5'-phosphate oxidase C1952.08c homolog (190 aa).

The FMN site is built by Ser62 and Lys69.

Belongs to the pyridoxamine 5'-phosphate oxidase family. It depends on FMN as a cofactor.

The protein resides in the cytoplasm. It localises to the nucleus. The sequence is that of Pyridoxamine 5'-phosphate oxidase C1952.08c homolog from Schizosaccharomyces pombe (strain 972 / ATCC 24843) (Fission yeast).